The primary structure comprises 398 residues: Acetate kinase (398 aa).

Mg(2+) is bound at residue N7. Residue K14 participates in ATP binding. R96 lines the substrate pocket. The active-site Proton donor/acceptor is the D153. ATP is bound by residues 210-214, 284-286, and 332-336; these read HLGNG, DLR, and GIGEH. E385 is a binding site for Mg(2+).

It belongs to the acetokinase family. Homodimer. It depends on Mg(2+) as a cofactor. Mn(2+) is required as a cofactor.

The protein localises to the cytoplasm. It catalyses the reaction acetate + ATP = acetyl phosphate + ADP. The protein operates within metabolic intermediate biosynthesis; acetyl-CoA biosynthesis; acetyl-CoA from acetate: step 1/2. In terms of biological role, catalyzes the formation of acetyl phosphate from acetate and ATP. Can also catalyze the reverse reaction. This is Acetate kinase from Acaryochloris marina (strain MBIC 11017).